A 166-amino-acid polypeptide reads, in one-letter code: Large ribosomal subunit protein bL9 (166 aa).

The protein belongs to the bacterial ribosomal protein bL9 family.

Binds to the 23S rRNA. This chain is Large ribosomal subunit protein bL9, found in Borrelia garinii subsp. bavariensis (strain ATCC BAA-2496 / DSM 23469 / PBi) (Borreliella bavariensis).